We begin with the raw amino-acid sequence, 270 residues long: Diaminopimelate epimerase (270 aa).

Residues asparagine 15, glutamine 49, and asparagine 66 each contribute to the substrate site. The active-site Proton donor is the cysteine 75. Residues 76 to 77, asparagine 155, asparagine 187, and 204 to 205 each bind substrate; these read GN and ER. The active-site Proton acceptor is the cysteine 213. 214–215 lines the substrate pocket; the sequence is GS.

It belongs to the diaminopimelate epimerase family. In terms of assembly, homodimer.

Its subcellular location is the cytoplasm. The catalysed reaction is (2S,6S)-2,6-diaminopimelate = meso-2,6-diaminopimelate. Its pathway is amino-acid biosynthesis; L-lysine biosynthesis via DAP pathway; DL-2,6-diaminopimelate from LL-2,6-diaminopimelate: step 1/1. Catalyzes the stereoinversion of LL-2,6-diaminopimelate (L,L-DAP) to meso-diaminopimelate (meso-DAP), a precursor of L-lysine and an essential component of the bacterial peptidoglycan. This is Diaminopimelate epimerase from Rickettsia prowazekii (strain Madrid E).